We begin with the raw amino-acid sequence, 337 residues long: Exopolysaccharide phosphotransferase cps2G (337 aa).

Belongs to the stealth family.

In Lactiplantibacillus plantarum (strain ATCC BAA-793 / NCIMB 8826 / WCFS1) (Lactobacillus plantarum), this protein is Exopolysaccharide phosphotransferase cps2G (cps2G).